The sequence spans 537 residues: Cytochrome c oxidase subunit 1 (537 aa).

Residues 22-42 (ILYLLFGLVSGIIGSVFSFII) traverse the membrane as a helical segment. Ca(2+) contacts are provided by E45, A48, and G50. H68 contacts Fe(II)-heme a. 8 consecutive transmembrane segments (helical) span residues 70–90 (ILMIFFFIIPALFGAFGNYLV), 104–124 (VNNFTFWLLPPALMLLLISAL), 152–172 (LAILSLQLTGISSTLGSVNLI), 190–210 (LFAWAIMITSILLLLTLPVLA), 241–261 (LFWFFGHPEVYILIMPAFGVV), 279–299 (MLWAMLSIALLGLMVWSHHLF), 318–338 (IAIPTGIKIFSWLATLTGGAI), and 345–365 (MLYAIGFLILFTIGGLTGVIL). H247 contributes to the Cu cation binding site. A cross-link (1'-histidyl-3'-tyrosine (His-Tyr)) is located at residues 247 to 251 (HPEVY). Residue Y251 participates in O2 binding. Cu cation contacts are provided by H296 and H297. 2 residues coordinate Mg(2+): H375 and D376. Transmembrane regions (helical) follow at residues 379-399 (FVVAHFHYVLSMGALFGLCGA) and 418-438 (IQFWILFIGVNIVFGPQHFLG). H383 is a heme a3 binding site. A Fe(II)-heme a-binding site is contributed by H385. P447 contributes to the Ca(2+) binding site. Residues 458-478 (FVSSIGSVISILSLFLFMYVM) form a helical membrane-spanning segment.

It belongs to the heme-copper respiratory oxidase family. In terms of assembly, component of the cytochrome c oxidase (complex IV, CIV), a multisubunit enzyme composed of a catalytic core of 3 subunits and several supernumerary subunits. The complex exists as a monomer or a dimer and forms supercomplexes (SCs) in the inner mitochondrial membrane with ubiquinol-cytochrome c oxidoreductase (cytochrome b-c1 complex, complex III, CIII). Requires heme as cofactor. The cofactor is Cu cation.

Its subcellular location is the mitochondrion inner membrane. The catalysed reaction is 4 Fe(II)-[cytochrome c] + O2 + 8 H(+)(in) = 4 Fe(III)-[cytochrome c] + 2 H2O + 4 H(+)(out). The protein operates within energy metabolism; oxidative phosphorylation. Functionally, component of the cytochrome c oxidase, the last enzyme in the mitochondrial electron transport chain which drives oxidative phosphorylation. The respiratory chain contains 3 multisubunit complexes succinate dehydrogenase (complex II, CII), ubiquinol-cytochrome c oxidoreductase (cytochrome b-c1 complex, complex III, CIII) and cytochrome c oxidase (complex IV, CIV), that cooperate to transfer electrons derived from NADH and succinate to molecular oxygen, creating an electrochemical gradient over the inner membrane that drives transmembrane transport and the ATP synthase. Cytochrome c oxidase is the component of the respiratory chain that catalyzes the reduction of oxygen to water. Electrons originating from reduced cytochrome c in the intermembrane space (IMS) are transferred via the dinuclear copper A center (CU(A)) of subunit 2 and heme A of subunit 1 to the active site in subunit 1, a binuclear center (BNC) formed by heme A3 and copper B (CU(B)). The BNC reduces molecular oxygen to 2 water molecules using 4 electrons from cytochrome c in the IMS and 4 protons from the mitochondrial matrix. This chain is Cytochrome c oxidase subunit 1 (cox1), found in Schizosaccharomyces pombe (strain 972 / ATCC 24843) (Fission yeast).